Here is a 1406-residue protein sequence, read N- to C-terminus: Carboxypeptidase D (1406 aa).

Positions 1–25 (MPTLGLLFASIGIAVLAMGVPHCRG) are cleaved as a signal peptide. Topologically, residues 26 to 1312 (YTIKEDESFL…VNEHVFGLPR (1287 aa)) are extracellular. Peptidase M14 domains are found at residues 39–335 (HYAS…LRQA) and 455–760 (EHHN…IEQV). Residues H101 and E104 each contribute to the Zn(2+) site. N133 carries an N-linked (GlcNAc...) asparagine glycan. 3 cysteine pairs are disulfide-bonded: C156-C309, C236-C237, and C268-C308. A Zn(2+)-binding site is contributed by H217. The N-linked (GlcNAc...) asparagine glycan is linked to N269. E305 (proton donor/acceptor) is an active-site residue. The N-linked (GlcNAc...) asparagine glycan is linked to N458. Zn(2+) is bound by residues H517 and E520. Residues N549 and N612 are each glycosylated (N-linked (GlcNAc...) asparagine). Residue H626 coordinates Zn(2+). N652 is a glycosylation site (N-linked (GlcNAc...) asparagine). E730 (proton donor/acceptor) is an active-site residue. 5 N-linked (GlcNAc...) asparagine glycosylation sites follow: N787, N808, N981, N1152, and N1251. A Peptidase M14 3 domain is found at 863 to 1121 (RYHTNPQVRA…DKIKNFLALV (259 aa)). Residues 1313 to 1333 (FLFILCASVLIIVGVIVCVLC) traverse the membrane as a helical segment. The Cytoplasmic portion of the chain corresponds to 1334 to 1406 (AQFWFYRRHR…TNYSFIIQAA (73 aa)). The Cell attachment site signature appears at 1343 to 1345 (RGD). Residue S1380 is modified to Phosphoserine.

This sequence belongs to the peptidase M14 family. Monomer. Zn(2+) serves as cofactor. As to expression, expressed in the central nervous system (CNS) of adults and larvae. In the adult brain, increased levels of expression in the mushroom body (MB) and neurosecretory cells.

Its subcellular location is the membrane. It is found in the cytoplasm. The protein localises to the perinuclear region. It localises to the golgi apparatus. The protein resides in the trans-Golgi network. Its subcellular location is the secreted. The catalysed reaction is Releases C-terminal Arg and Lys from polypeptides.. With respect to regulation, inhibited by 2-guanidinoethylmercaptosuccinic acid (GEMSA). Its function is as follows. Metallocarboxypeptidase that catalyzes the release of C-terminal arginine or lysine residues from peptides and proteins. Functionally important for processing a broad range of proteins including growth factors, peptide hormones (such as Akh) and neuropeptides. Consequently, it is involved in a wide range of processes including viability, memory formation, locomotive activity, wing formation, and peptide-regulated behaviors such as starvation-induced hyperactivity, appetitive gustatory preference, and cold and ethanol sensitivity. Key enzyme in neuropeptide processing. Involved in regulation of memory formation, possibly via the insulin pathway in neurosecretory cells. The protein is Carboxypeptidase D of Drosophila melanogaster (Fruit fly).